A 355-amino-acid chain; its full sequence is SH3 domain-containing protein Dlish (355 aa).

SH3 domains are found at residues 57-117 (SPDS…PCNT), 183-243 (EPSG…PADS), and 287-352 (YHGT…PPAM).

In terms of assembly, interacts with dachs (via C-terminus); the interaction is direct. Interacts (via N-terminus including SH3 domain 1) with palmitoyltransferase app; this leads to palmitoylation of Dlish by app. Also interacts with dco, ft, ft-regulated E3 ubiquitin ligase Fbxl7, F-box protein slmb and SCF E3 ubiquitin-protein ligase complex component Cul1. Palmitoylated by app.

It localises to the cytoplasm. The protein resides in the cell cortex. Its function is as follows. Required for the apical cell cortex localization, total cellular level and full activity of dachs. In Drosophila melanogaster (Fruit fly), this protein is SH3 domain-containing protein Dlish.